The chain runs to 205 residues: GTP cyclohydrolase 1 (205 aa).

Positions 95, 98, and 166 each coordinate Zn(2+).

Belongs to the GTP cyclohydrolase I family. As to quaternary structure, toroid-shaped homodecamer, composed of two pentamers of five dimers.

It catalyses the reaction GTP + H2O = 7,8-dihydroneopterin 3'-triphosphate + formate + H(+). It participates in cofactor biosynthesis; 7,8-dihydroneopterin triphosphate biosynthesis; 7,8-dihydroneopterin triphosphate from GTP: step 1/1. The sequence is that of GTP cyclohydrolase 1 from Maricaulis maris (strain MCS10) (Caulobacter maris).